Here is a 202-residue protein sequence, read N- to C-terminus: Imidazoleglycerol-phosphate dehydratase (202 aa).

It belongs to the imidazoleglycerol-phosphate dehydratase family.

It is found in the cytoplasm. It carries out the reaction D-erythro-1-(imidazol-4-yl)glycerol 3-phosphate = 3-(imidazol-4-yl)-2-oxopropyl phosphate + H2O. The protein operates within amino-acid biosynthesis; L-histidine biosynthesis; L-histidine from 5-phospho-alpha-D-ribose 1-diphosphate: step 6/9. This is Imidazoleglycerol-phosphate dehydratase from Acinetobacter baumannii (strain AYE).